The following is a 322-amino-acid chain: uncharacterized protein (322 aa).

Residues 299-319 (GLLLEGTIVALILLEIILALA) traverse the membrane as a helical segment.

The protein resides in the membrane. This is an uncharacterized protein from Methanocaldococcus jannaschii (strain ATCC 43067 / DSM 2661 / JAL-1 / JCM 10045 / NBRC 100440) (Methanococcus jannaschii).